Here is a 418-residue protein sequence, read N- to C-terminus: MEKQTRLSDLPDELLLKILSALPMFKVTLATRLISRRWKGPWKLVPDVTFDDDDIPFKSFETFMSFVYGSFLSNDAQILDRLHLKLNQKYSASDINFWVQVAVNRSVRELRIDLFGKTLELPCCLCSCITLKELTLHDLCIKVVPAWFRLPSLKTLHLLSVKFSSDGFVASILRICPVLERLVVDGTKGNVMITNIDVPTLRNLSIRNSKGKGTYVEGSKGFVIKAPSLTDLNFEDTLSNFLMFEPMPEVIKADIQVICDQSKNFIGSLTSIQHLSLCSLTSKTPYPACTVFSSLKYLELCTCSARWANLFACILNAAPELRSLKLKSKHKFNYNDPMTLWEEPAVVAKCLSEHLEIFEWRQYEGTEQERNVAGYILANATCLKMATFSTRCRNRNHRMLKKLKSMDRVSKACRLVFD.

The F-box domain maps to 4-60; sequence QTRLSDLPDELLLKILSALPMFKVTLATRLISRRWKGPWKLVPDVTFDDDDIPFKSF. Positions 340–390 constitute an FBD domain; the sequence is LWEEPAVVAKCLSEHLEIFEWRQYEGTEQERNVAGYILANATCLKMATFST.

This is Putative FBD-associated F-box protein At5g56560 from Arabidopsis thaliana (Mouse-ear cress).